Here is a 147-residue protein sequence, read N- to C-terminus: Transcriptional regulator MraZ (147 aa).

SpoVT-AbrB domains follow at residues 5–50 and 79–122; these read AIAL…PLSA and AQEE…SDAG.

It belongs to the MraZ family. Forms oligomers.

The protein resides in the cytoplasm. Its subcellular location is the nucleoid. In Aromatoleum aromaticum (strain DSM 19018 / LMG 30748 / EbN1) (Azoarcus sp. (strain EbN1)), this protein is Transcriptional regulator MraZ.